The sequence spans 300 residues: Putative 1-phosphofructokinase (300 aa).

Residues serine 214–glycine 219 and glycine 246–aspartate 247 contribute to the ATP site. The active-site Proton acceptor is the aspartate 247.

The protein belongs to the carbohydrate kinase PfkB family.

It carries out the reaction beta-D-fructose 1-phosphate + ATP = beta-D-fructose 1,6-bisphosphate + ADP + H(+). Functionally, catalyzes the ATP-dependent phosphorylation of fructose-l-phosphate to fructose-l,6-bisphosphate. This is Putative 1-phosphofructokinase (fruK) from Mycoplasma pneumoniae (strain ATCC 29342 / M129 / Subtype 1) (Mycoplasmoides pneumoniae).